The sequence spans 131 residues: uncharacterized protein (131 aa).

This is an uncharacterized protein from Mycobacterium tuberculosis (strain CDC 1551 / Oshkosh).